A 527-amino-acid polypeptide reads, in one-letter code: G patch domain-containing protein 2 (527 aa).

The segment at 35–135 (LEESSEQARG…RPSSNLSSSV (101 aa)) is disordered. The segment covering 62–76 (RQARKRRGRKRRSYN) has biased composition (basic residues). The span at 97-116 (EPSKDYREKHSNNKKDRSDS) shows a compositional bias: basic and acidic residues. 3 positions are modified to phosphoserine: Ser114, Ser116, and Ser145. 3 disordered regions span residues 175–281 (SSKR…GDDE), 350–375 (TPSKNIKKSSGAPPSMLSAPGPGSNK), and 480–527 (TPGS…GNPA). Residues 186–196 (GCRDQDMDNDR) show a composition bias toward basic and acidic residues. The segment covering 206–215 (KKVKKRKLKG) has biased composition (basic residues). A compositionally biased stretch (basic and acidic residues) spans 231 to 257 (SEERSQPNKDRMEYEEQKASDELRSES). A G-patch domain is found at 466–512 (ESNIGNRMLQSMGWTPGSGLGRDGRGIAEPVQAVQRPKGLGLGFPLP). Residues 510–527 (PLPKSSPTSPAPTSGNPA) are compositionally biased toward low complexity.

As to quaternary structure, interacts with DHX15.

The protein localises to the nucleus speckle. It is found in the nucleus. Its subcellular location is the nucleolus. Functionally, enhances the ATPase activity of DHX15 in vitro. This chain is G patch domain-containing protein 2 (Gpatch2), found in Mus musculus (Mouse).